Reading from the N-terminus, the 699-residue chain is Elongation factor G (699 aa).

Positions 8 to 283 (EHIRNIGICA…AVVDFLPSPI (276 aa)) constitute a tr-type G domain. GTP-binding positions include 17–24 (AHIDAGKT), 81–85 (DTPGH), and 135–138 (NKMD).

Belongs to the TRAFAC class translation factor GTPase superfamily. Classic translation factor GTPase family. EF-G/EF-2 subfamily.

The protein localises to the cytoplasm. Catalyzes the GTP-dependent ribosomal translocation step during translation elongation. During this step, the ribosome changes from the pre-translocational (PRE) to the post-translocational (POST) state as the newly formed A-site-bound peptidyl-tRNA and P-site-bound deacylated tRNA move to the P and E sites, respectively. Catalyzes the coordinated movement of the two tRNA molecules, the mRNA and conformational changes in the ribosome. This is Elongation factor G from Rickettsia peacockii (strain Rustic).